A 405-amino-acid chain; its full sequence is MDNILNPEDNVSQTNTETDVTDGPFQYVKEEHSSHKFTASGQNLDSPPKNKKSPLKRKAGEPESPSKRPRLEEGHGSLVVTHYNELPETGLETRSQSRIFHLRNFNNWMKSALIGEFVEKVRQRTRNIAVLDLGCGKGGDLLKWRKGGISKLVCTDIADVSVKQCEERYKDLKRKSRNERVFEAEFLTADSTKELLSEKYNDPEIKFDICSCQFVYHYSFETYEQADMMLRNACERLCPGGFFIGTTPDGFELVKRLEASDTNSFGNDVYTVKFEKKGKYPLFGCKYDFSLEEVVNVPEFLVYFPVLVEMAKKYQMKLIYKKTFREFFEEKVKNDEQKMLLKRMKALEPYPAAPNFKLVSGRTEDYEHAQKLVENGQVKLPLGTLSKSEWEATSIYLLFAFEKQA.

Positions 1-78 (MDNILNPEDN…PRLEEGHGSL (78 aa)) are disordered. Composition is skewed to polar residues over residues 9–18 (DNVSQTNTET) and 36–45 (KFTASGQNLD). Basic and acidic residues predominate over residues 58 to 75 (KAGEPESPSKRPRLEEGH). In terms of domain architecture, mRNA cap 0 methyltransferase spans 97 to 404 (SRIFHLRNFN…IYLLFAFEKQ (308 aa)). 106–107 (NN) contacts mRNA. S-adenosyl-L-methionine contacts are provided by Lys-110, Gly-134, Asp-156, Asp-190, Gln-213, and Tyr-218.

Belongs to the class I-like SAM-binding methyltransferase superfamily. mRNA cap 0 methyltransferase family.

Its subcellular location is the nucleus. It carries out the reaction a 5'-end (5'-triphosphoguanosine)-ribonucleoside in mRNA + S-adenosyl-L-methionine = a 5'-end (N(7)-methyl 5'-triphosphoguanosine)-ribonucleoside in mRNA + S-adenosyl-L-homocysteine. Functionally, catalytic subunit of the mRNA-capping methyltransferase RNMT:RAMAC complex that methylates the N7 position of the added guanosine to the 5'-cap structure of mRNAs. Binds RNA containing 5'-terminal GpppC. The polypeptide is mRNA cap guanine-N(7) methyltransferase (rnmt) (Xenopus tropicalis (Western clawed frog)).